The primary structure comprises 365 residues: Anhydro-N-acetylmuramic acid kinase (365 aa).

12 to 19 lines the ATP pocket; the sequence is GTSMDGMD.

The protein belongs to the anhydro-N-acetylmuramic acid kinase family.

The catalysed reaction is 1,6-anhydro-N-acetyl-beta-muramate + ATP + H2O = N-acetyl-D-muramate 6-phosphate + ADP + H(+). It participates in amino-sugar metabolism; 1,6-anhydro-N-acetylmuramate degradation. Its pathway is cell wall biogenesis; peptidoglycan recycling. Catalyzes the specific phosphorylation of 1,6-anhydro-N-acetylmuramic acid (anhMurNAc) with the simultaneous cleavage of the 1,6-anhydro ring, generating MurNAc-6-P. Is required for the utilization of anhMurNAc either imported from the medium or derived from its own cell wall murein, and thus plays a role in cell wall recycling. The chain is Anhydro-N-acetylmuramic acid kinase from Pseudomonas paraeruginosa (strain DSM 24068 / PA7) (Pseudomonas aeruginosa (strain PA7)).